Reading from the N-terminus, the 412-residue chain is Mannose-1-phosphate guanylyltransferase regulatory subunit alpha (412 aa).

The interval 6–259 (TKAIILVGGP…VGFWRQIKNA (254 aa)) is substrate-binding domain. The GDP-alpha-D-mannose site is built by Glu88 and Gln255. The hexapeptide repeat domain stretch occupies residues 281 to 412 (LKKGNNIIGN…DRNYNNEIIL (132 aa)).

The protein belongs to the transferase hexapeptide repeat family. Component of the GMPPA-GMPPB mannose-1-phosphate guanylyltransferase complex composed of 4 gmppA subunits and 8 gmppB subunits; the complex is organized into three layers, a central layer made up of 2 gmppA dimers sandwiched between two layers each made up of 2 gmppB dimers.

Regulatory subunit of the GMPPA-GMPPB mannose-1-phosphate guanylyltransferase complex; reduces the catalytic activity of GMPPB when part of the complex. Mediates allosteric feedback inhibition of GMPPB catalytic activity upon binding GDP-alpha-D-mannose. Together with GMPPB regulates GDP-alpha-D-mannose levels. In Dictyostelium discoideum (Social amoeba), this protein is Mannose-1-phosphate guanylyltransferase regulatory subunit alpha (gmppA).